Reading from the N-terminus, the 161-residue chain is Cyclin-dependent protein kinase inhibitor SMR12 (161 aa).

The segment covering 84-93 has biased composition (acidic residues); the sequence is EEEEVVEEEN. The segment at 84 to 106 is disordered; the sequence is EEEEVVEEENDGFKTPTRPENRI.

In terms of biological role, probable cyclin-dependent protein kinase (CDK) inhibitor that functions as a repressor of mitosis in the endoreduplication cell cycle. In Arabidopsis thaliana (Mouse-ear cress), this protein is Cyclin-dependent protein kinase inhibitor SMR12.